A 201-amino-acid chain; its full sequence is Adenylyl-sulfate kinase (201 aa).

35–42 (GLSGSGKS) lines the ATP pocket. Ser-109 (phosphoserine intermediate) is an active-site residue.

This sequence belongs to the APS kinase family.

The enzyme catalyses adenosine 5'-phosphosulfate + ATP = 3'-phosphoadenylyl sulfate + ADP + H(+). Its pathway is sulfur metabolism; hydrogen sulfide biosynthesis; sulfite from sulfate: step 2/3. Its function is as follows. Catalyzes the synthesis of activated sulfate. In Escherichia coli (strain ATCC 8739 / DSM 1576 / NBRC 3972 / NCIMB 8545 / WDCM 00012 / Crooks), this protein is Adenylyl-sulfate kinase.